A 507-amino-acid polypeptide reads, in one-letter code: Extracellular elastase (507 aa).

Positions 1–28 are cleaved as a signal peptide; sequence MKNFSKFALTSIAALTVASPLVNTEVDA. Positions 29–207 are excised as a propeptide; it reads KDKVSATQNI…VVDKLNMIKE (179 aa). A Ca(2+)-binding site is contributed by D347. Residue H351 coordinates Zn(2+). E352 is an active-site residue. H355 and E375 together coordinate Zn(2+). Ca(2+) is bound by residues D386, E388, D389, L391, E394, Y397, T398, V401, and D404. H435 functions as the Proton donor in the catalytic mechanism.

It belongs to the peptidase M4 family. It depends on Ca(2+) as a cofactor. The cofactor is Zn(2+).

The protein resides in the secreted. Functionally, protease that has a low substrate specificity. Glucagon is preferentially cleaved between aromatic (Phe) and hydrophobic (Val) amino acids. Hydrolyzes casein and elastin. The protein is Extracellular elastase (sepA) of Staphylococcus epidermidis (strain ATCC 12228 / FDA PCI 1200).